The primary structure comprises 154 residues: 6,7-dimethyl-8-ribityllumazine synthase (154 aa).

5-amino-6-(D-ribitylamino)uracil contacts are provided by residues Phe-22, Ala-56 to Glu-58, and Val-81 to Ile-83. Glu-86–Thr-87 is a (2S)-2-hydroxy-3-oxobutyl phosphate binding site. The active-site Proton donor is His-89. Leu-114 provides a ligand contact to 5-amino-6-(D-ribitylamino)uracil. Arg-128 provides a ligand contact to (2S)-2-hydroxy-3-oxobutyl phosphate.

The protein belongs to the DMRL synthase family.

The catalysed reaction is (2S)-2-hydroxy-3-oxobutyl phosphate + 5-amino-6-(D-ribitylamino)uracil = 6,7-dimethyl-8-(1-D-ribityl)lumazine + phosphate + 2 H2O + H(+). Its pathway is cofactor biosynthesis; riboflavin biosynthesis; riboflavin from 2-hydroxy-3-oxobutyl phosphate and 5-amino-6-(D-ribitylamino)uracil: step 1/2. Functionally, catalyzes the formation of 6,7-dimethyl-8-ribityllumazine by condensation of 5-amino-6-(D-ribitylamino)uracil with 3,4-dihydroxy-2-butanone 4-phosphate. This is the penultimate step in the biosynthesis of riboflavin. In Chlamydia pneumoniae (Chlamydophila pneumoniae), this protein is 6,7-dimethyl-8-ribityllumazine synthase.